The chain runs to 401 residues: Phosphoglycerate kinase (401 aa).

Substrate-binding positions include 21-23 (DLN), Arg-36, 59-62 (HQGR), Arg-116, and Arg-156. Residues Glu-331 and 357–360 (GGDT) each bind ATP.

It belongs to the phosphoglycerate kinase family.

The protein resides in the cytoplasm. The enzyme catalyses (2R)-3-phosphoglycerate + ATP = (2R)-3-phospho-glyceroyl phosphate + ADP. Its pathway is carbohydrate degradation; glycolysis; pyruvate from D-glyceraldehyde 3-phosphate: step 2/5. This Haloarcula vallismortis (Halobacterium vallismortis) protein is Phosphoglycerate kinase (pgk).